Here is a 319-residue protein sequence, read N- to C-terminus: Acetyl esterase (319 aa).

Residues 91 to 93 carry the Involved in the stabilization of the negatively charged intermediate by the formation of the oxyanion hole motif; sequence HGG. Catalysis depends on residues Ser165, Asp262, and His292.

The protein belongs to the 'GDXG' lipolytic enzyme family. As to quaternary structure, homodimer. Interacts with MalT and MelA.

Its subcellular location is the cytoplasm. Its function is as follows. Displays esterase activity towards short chain fatty esters (acyl chain length of up to 8 carbons). Able to hydrolyze triacetylglycerol (triacetin) and tributyrylglycerol (tributyrin), but not trioleylglycerol (triolein) or cholesterol oleate. Negatively regulates MalT activity by antagonizing maltotriose binding. Inhibits MelA galactosidase activity. The chain is Acetyl esterase from Escherichia coli O17:K52:H18 (strain UMN026 / ExPEC).